The sequence spans 883 residues: EEF1AKMT4-ECE2 readthrough transcript protein (883 aa).

The segment at Met1–Glu160 is methyltransferase-like region. The Cytoplasmic segment spans residues Met1–Glu178. 2 residues coordinate S-adenosyl-L-methionine: Trp26 and Tyr30. A Phosphotyrosine modification is found at Tyr39. S-adenosyl-L-methionine is bound by residues Trp41, Gly66, Asp88–Tyr89, Asp113–Val114, and Lys130. The helical transmembrane segment at Leu179–Leu199 threads the bilayer. Residues Gly200–Trp883 lie on the Lumenal side of the membrane. Residues Thr211–Trp883 enclose the Peptidase M13 domain. 5 cysteine pairs are disulfide-bonded: Cys212/Cys217, Cys235/Cys868, Cys243/Cys828, Cys299/Cys548, and Cys757/Cys880. N-linked (GlcNAc...) asparagine glycosylation is found at Asn279, Asn283, Asn324, Asn384, Asn429, Asn496, and Asn652. His720 lines the Zn(2+) pocket. Glu721 is a catalytic residue. Zn(2+) is bound at residue His724. N-linked (GlcNAc...) asparagine glycans are attached at residues Asn745 and Asn753. Glu780 contacts Zn(2+). Asp784 functions as the Proton donor in the catalytic mechanism.

This sequence in the N-terminal section; belongs to the methyltransferase superfamily. The protein in the C-terminal section; belongs to the peptidase M13 family. Zn(2+) is required as a cofactor.

The protein localises to the golgi apparatus membrane. The protein resides in the cytoplasmic vesicle. Its subcellular location is the secretory vesicle membrane. It carries out the reaction Hydrolysis of the 21-Trp-|-Val-22 bond in big endothelin to form endothelin 1.. Inhibited by phosphoramidon. Converts big endothelin-1 to endothelin-1. May also have methyltransferase activity. May play a role in amyloid-beta processing. This is EEF1AKMT4-ECE2 readthrough transcript protein from Homo sapiens (Human).